We begin with the raw amino-acid sequence, 1002 residues long: Golgin subfamily A member 2 (1002 aa).

The segment covering 1–11 has biased composition (pro residues); it reads MWPQPRLPPRP. Residues 1–84 are interaction with p115/USO1; the sequence is MWPQPRLPPR…AATLQPSDDT (84 aa). The tract at residues 1 to 107 is disordered; it reads MWPQPRLPPR…TSMAASQNHD (107 aa). A coiled-coil region spans residues 16–892; that stretch reads ETRQSKLAAA…LELQELVLRL (877 aa). Dimethylated arginine occurs at positions 18, 30, and 35. The short motif at 26-49 is the Nuclear localization signal element; that stretch reads KKKLREYQQRNSPGVPTGAKKKKK. Phosphoserine is present on Ser37. Residues 52–63 show a composition bias toward polar residues; sequence NGSNPETTTSGG. Phosphoserine is present on Ser66. The segment covering 95-105 has biased composition (polar residues); sequence ASLTSMAASQN. Residues Ser273, Ser438, and Ser690 each carry the phosphoserine modification. The segment at 694 to 724 is disordered; it reads HPGEGDGLDREEEEDEEEEEEEAVAVPQPMP. Acidic residues predominate over residues 702–716; sequence DREEEEDEEEEEEEA. Phosphoserine occurs at positions 937, 953, and 981. An interaction with GORASP1/GRASP65 region spans residues 992–1002; the sequence is DENDEVKITVI.

It belongs to the GOLGA2 family. In terms of assembly, homodimer, may assemble into homohexamers. Homotetramer; forms a parallel homotetramer with a flexible rod-like structure that can give rise to I- and Y-shaped conformations. Interacts with GORASP1/GRASP65. The homooligomer forms a complex with GORASP1 with a 1:1 stoichiometry. Interacts with RAB1B that has been activated by GTP-binding. Interacts with p115/USO1; interaction with p115/USO1 inhibits interaction with STX5 and/or RAB1B. Interacts with STX5. Interacts with ZFPL1. Interacts with AKAP450/AKAP9; leading to recruit AKAP450/AKAP9 to the cis-Golgi. Cleaved by caspases at the onset of apoptosis. In terms of processing, methylation by PRMT5 is required for Golgi ribbon formation. While dimethylation at Arg-30 and Arg-35 are confirmed in vivo, it is unclear whether Arg-18 is methylated in vivo. Post-translationally, phosphorylated at Ser-37 by CDK1 at the onset of mitosis, inhibiting the interaction with p115/USO1 and triggering Golgi disassembly. Phosphorylated at Ser-37 in prophase as the Golgi complex starts to break down, and remains phosphorylated during further breakdown and partitioning of the Golgi fragments in metaphase and anaphase. In telophase, GM130 is dephosphorylated by PP2A as the Golgi fragments start to reassemble.

It localises to the golgi apparatus. Its subcellular location is the cis-Golgi network membrane. It is found in the endoplasmic reticulum-Golgi intermediate compartment membrane. The protein localises to the cytoplasm. The protein resides in the cytoskeleton. It localises to the spindle pole. Functionally, peripheral membrane component of the cis-Golgi stack that acts as a membrane skeleton that maintains the structure of the Golgi apparatus, and as a vesicle thether that facilitates vesicle fusion to the Golgi membrane. Required for normal protein transport from the endoplasmic reticulum to the Golgi apparatus and the cell membrane. Together with p115/USO1 and STX5, involved in vesicle tethering and fusion at the cis-Golgi membrane to maintain the stacked and inter-connected structure of the Golgi apparatus. Plays a central role in mitotic Golgi disassembly: phosphorylation at Ser-37 by CDK1 at the onset of mitosis inhibits the interaction with p115/USO1, preventing tethering of COPI vesicles and thereby inhibiting transport through the Golgi apparatus during mitosis. Also plays a key role in spindle pole assembly and centrosome organization. Promotes the mitotic spindle pole assembly by activating the spindle assembly factor TPX2 to nucleate microtubules around the Golgi and capture them to couple mitotic membranes to the spindle: upon phosphorylation at the onset of mitosis, GOLGA2 interacts with importin-alpha via the nuclear localization signal region, leading to recruit importin-alpha to the Golgi membranes and liberate the spindle assembly factor TPX2 from importin-alpha. TPX2 then activates AURKA kinase and stimulates local microtubule nucleation. Upon filament assembly, nascent microtubules are further captured by GOLGA2, thus linking Golgi membranes to the spindle. Regulates the meiotic spindle pole assembly, probably via the same mechanism. Also regulates the centrosome organization. Also required for the Golgi ribbon formation and glycosylation of membrane and secretory proteins. The sequence is that of Golgin subfamily A member 2 (GOLGA2) from Homo sapiens (Human).